Consider the following 1673-residue polypeptide: Protein TIC 214 (1673 aa).

6 helical membrane-spanning segments follow: residues 18-38 (IINS…FSIG), 67-87 (FITG…HLAL), 90-110 (PHTI…CNTH), 127-147 (LSIQ…HFIL), 175-195 (VGWI…VVWI), and 218-238 (SMSI…YYLG).

Belongs to the TIC214 family. In terms of assembly, part of the Tic complex.

The protein resides in the plastid. It is found in the chloroplast inner membrane. Functionally, involved in protein precursor import into chloroplasts. May be part of an intermediate translocation complex acting as a protein-conducting channel at the inner envelope. This is Protein TIC 214 from Lactuca sativa (Garden lettuce).